The sequence spans 539 residues: F-box only protein 31 (539 aa).

The tract at residues 11–53 is disordered; it reads GPSRGCRRRQQRRGPAETAAADSEPDTDPEEERIEASAGVGGG. Position 33 is a phosphoserine (Ser33). A Phosphoserine; by PKB/AKT1 modification is found at Ser33. Positions 33–43 are enriched in acidic residues; that stretch reads SEPDTDPEEER. Thr37 carries the post-translational modification Phosphothreonine. A D box motif is present at residues 64–69; the sequence is RCSLLE. In terms of domain architecture, F-box spans 64-110; that stretch reads RCSLLELPPELLVEIFASLPGTDLPSLAQVCTKFRRILHTDTIWRRR. The Zn(2+) site is built by Cys206, His214, Cys230, and His236. Ser278 is subject to Phosphoserine; by ATM. The short motif at 297–299 is the DDL motif element; it reads DDL. Over residues 377 to 397 the composition is skewed to basic and acidic residues; that stretch reads VRQEQQEGGHEAGEGRGRQGP. The disordered stretch occupies residues 377-446; sequence VRQEQQEGGH…PAQCGQGQPF (70 aa). Thr419 carries the post-translational modification Phosphothreonine; by MTOR. Ser480 is subject to Phosphoserine.

The protein belongs to the FBXO31 family. As to quaternary structure, part of a SCF (SKP1-cullin-F-box) protein ligase complex SCF(FBXO31) composed of CUL1, SKP1, RBX1 and FBXO31. Interacts (when phosphorylated at Ser-33) with CDC20, promoting ubiquitination by the APC/C complex. Phosphorylation at Ser-278 by ATM following gamma-irradiation results in its stabilization. Phosphorylation at Thr-419 and Ser-480 in absence of stress promotes its ubiquitination and degradation by the SCF(FBXO46) complex. Phosphorylation at Ser-33 by AKT1 promotes association with CDC20 and ubiquitination by the APC/C complex. In terms of processing, ubiquitinated by the SCF(FBXO46) complex in absence of stress, promoting its degradation. Ubiquitinated by the APC/C complex following phosphorylation at Ser-33, leading to its degradation by the proteasome. As to expression, highly expressed in brain. Expressed at moderate levels in most tissues, except bone marrow.

Its subcellular location is the cytoplasm. It localises to the cytoskeleton. It is found in the microtubule organizing center. The protein resides in the centrosome. It participates in protein modification; protein ubiquitination. Substrate-recognition component of the SCF(FBXO31) protein ligase complex, which specifically mediates the ubiquitination of proteins amidated at their C-terminus in response to oxidative stress, leading to their degradation by the proteasome. FBXO31 specifically recognizes and binds C-terminal peptides bearing an amide: C-terminal amidation in response to oxidative stress takes place following protein fragmentation. The SCF(FBXO31) also plays a role in G1 arrest following DNA damage by mediating ubiquitination of phosphorylated cyclin-D1 (CCND1), promoting its degradation by the proteasome, resulting in G1 arrest. The SCF(FBXO31) complex is however not a major regulator of CCND1 stability during the G1/S transition. In response to genotoxic stress, the SCF(FBXO31) complex directs ubiquitination and degradation of phosphorylated MDM2, thereby promoting p53/TP53-mediated DNA damage response. SCF(FBXO31) complex is required for genomic integrity by catalyzing ubiquitination and degradation of cyclin-A (CCNA1 and/or CCNA2) during the G1 phase. In response to genotoxic stress, the SCF(FBXO31) complex directs ubiquitination and degradation of phosphorylated FBXO46 and MAP2K6. SCF(FBXO31) complex promotes ubiquitination and degradation of CDT1 during the G2 phase to prevent re-replication. The SCF(FBXO31) complex also mediates ubiquitination and degradation of DUSP6, OGT and PARD6A. The chain is F-box only protein 31 from Homo sapiens (Human).